Consider the following 642-residue polypeptide: Eukaryotic translation initiation factor 2A (642 aa).

WD repeat units lie at residues 69–115 (MKLS…KKDC), 186–224 (TYLI…ITKK), 289–331 (LTTG…HSLP), and 374–419 (FDAT…VFVK). The interval 485-593 (ISQHPSREAS…KETSPEEKKI (109 aa)) is disordered. Composition is skewed to low complexity over residues 493-507 (ASSN…AGGA) and 563-583 (TSPD…PTNN). A phosphoserine mark is found at S564, S567, and S572.

This sequence belongs to the WD repeat EIF2A family. In terms of processing, ubiquitinated, probably leading to its degradation. May explain why it has a short half-life of 17 minutes.

Its function is as follows. Functions in the early steps of protein synthesis of a small number of specific mRNAs. Acts by directing the binding of methionyl-tRNAi to 40S ribosomal subunits. In contrast to the eIF-2 complex, it binds methionyl-tRNAi to 40S subunits in a codon-dependent manner, whereas the eIF-2 complex binds methionyl-tRNAi to 40S subunits in a GTP-dependent manner. Specifically associates with both 40S subunits and 80S ribosomes. The chain is Eukaryotic translation initiation factor 2A from Saccharomyces cerevisiae (strain ATCC 204508 / S288c) (Baker's yeast).